A 396-amino-acid chain; its full sequence is Transcription factor IIIB 50 kDa subunit (396 aa).

The segment at 3–36 (GAKRCPDCGSSEIVEDAHYSQDQLVCADCGCILS) adopts a TFIIB-type zinc-finger fold. 4 residues coordinate Zn(2+): Cys-7, Cys-10, Cys-28, and Cys-31. Residues 173–249 (VKSHCRSFKL…SRRLSCSLSR (77 aa)) form repeat 2. Cys-342 is modified (cysteine sulfenic acid (-SOH)).

This sequence belongs to the TFIIB family. In terms of assembly, component of TFIIIB complexes. Interacts with TBP and forms a ternary complex with TBp and target DNA sequences. In response to oxidative stress, a Cys-residue is reversibly oxidized to cysteine sulfenic acid. This impairs formation of a ternary complex with TBP and DNA and down-regulates expression of target genes in response to oxidative stress.

It is found in the nucleus. Functionally, general activator of RNA polymerase III transcription. Factor exclusively required for RNA polymerase III transcription of genes with promoter elements upstream of the initiation sites. Contributes to the regulation of gene expression; functions as activator in the absence of oxidative stress. Down-regulates expression of target genes in response to oxidative stress. Overexpression protects cells against apoptosis in response to oxidative stress. The sequence is that of Transcription factor IIIB 50 kDa subunit (brf2) from Xenopus laevis (African clawed frog).